Consider the following 146-residue polypeptide: uncharacterized protein (146 aa).

The next 4 helical transmembrane spans lie at 1 to 21 (MFANAGLSPFVAIWTARAASL), 35 to 55 (AAVYVGSAVVPAAVAGPLFVG), 87 to 107 (GGAGGWVGVHCPVVGGGGVGH), and 111 to 131 (AIAAAVSVHSTCMPAAFGGHL).

The protein resides in the cell membrane. This is an uncharacterized protein from Mycobacterium tuberculosis (strain CDC 1551 / Oshkosh).